Here is a 191-residue protein sequence, read N- to C-terminus: Classical arabinogalactan protein 9 (191 aa).

An N-terminal signal peptide occupies residues 1–20 (MARSFAIAVICIVLIAGVTG). The tract at residues 20 to 172 (GQAPTSPPTA…SPTDVNDQNG (153 aa)) is disordered. Gln-21 carries the post-translational modification Pyrrolidone carboxylic acid. A 4-hydroxyproline mark is found at Pro-23, Pro-26, Pro-27, Pro-31, and Pro-33. The span at 24-146 (TSPPTATPAP…PSPSSSPPLP (123 aa)) shows a compositional bias: pro residues. Residues Pro-26, Pro-27, Pro-31, and Pro-33 are each glycosylated (O-linked (Ara...) hydroxyproline). The span at 155-172 (TDSISPAPSPTDVNDQNG) shows a compositional bias: polar residues. Gly-172 carries the GPI-anchor amidated glycine lipid modification. Residues 173-191 (ASKMVSSLVFGSVLVWFMI) constitute a propeptide, removed in mature form.

It belongs to the classical AGP family. O-glycosylated on hydroxyprolines; noncontiguous hydroxylproline residues are glycosylated with arabinogalactan. In terms of tissue distribution, predominantly expressed in flowers and at a lower level in leaves and siliques.

The protein resides in the cell membrane. In terms of biological role, proteoglycan that seems to be implicated in diverse developmental roles such as differentiation, cell-cell recognition, embryogenesis and programmed cell death. The protein is Classical arabinogalactan protein 9 (AGP9) of Arabidopsis thaliana (Mouse-ear cress).